Reading from the N-terminus, the 83-residue chain is Small ribosomal subunit protein uS17 (83 aa).

The protein belongs to the universal ribosomal protein uS17 family. In terms of assembly, part of the 30S ribosomal subunit.

Its function is as follows. One of the primary rRNA binding proteins, it binds specifically to the 5'-end of 16S ribosomal RNA. In Chlamydia abortus (strain DSM 27085 / S26/3) (Chlamydophila abortus), this protein is Small ribosomal subunit protein uS17.